Here is a 150-residue protein sequence, read N- to C-terminus: Deoxyuridine 5'-triphosphate nucleotidohydrolase (150 aa).

Residues 69–71, Asn82, 86–88, and Met96 contribute to the substrate site; these read RSG and LID.

Belongs to the dUTPase family. Mg(2+) serves as cofactor.

The catalysed reaction is dUTP + H2O = dUMP + diphosphate + H(+). It functions in the pathway pyrimidine metabolism; dUMP biosynthesis; dUMP from dCTP (dUTP route): step 2/2. In terms of biological role, this enzyme is involved in nucleotide metabolism: it produces dUMP, the immediate precursor of thymidine nucleotides and it decreases the intracellular concentration of dUTP so that uracil cannot be incorporated into DNA. This chain is Deoxyuridine 5'-triphosphate nucleotidohydrolase, found in Alcanivorax borkumensis (strain ATCC 700651 / DSM 11573 / NCIMB 13689 / SK2).